The chain runs to 90 residues: Probable two-component-system connector protein YmgA (90 aa).

Polar residues predominate over residues serine 63–methionine 80. Residues serine 63–histidine 90 form a disordered region.

In terms of biological role, probably a connector protein for RcsB/C regulation of biofilm formation, providing additional signal input into the two-component signaling pathway. May serve to stimulate biofilm maturation, probably via the Rcs phosphorelay. Mild overexpression at 16 degrees Celsius increases the production of colanic acid, an exopolysaccharide and matrix component, and reduces adhesive curli fimbriae expression. Both of these effects require RcsB. The sequence is that of Probable two-component-system connector protein YmgA (ymgA) from Escherichia coli (strain K12).